The sequence spans 406 residues: Argininosuccinate synthase (406 aa).

ATP is bound by residues 11-19 and Ala-38; that span reads AYSGGLDTS. Residues Tyr-91 and Ser-96 each coordinate L-citrulline. Gly-121 lines the ATP pocket. Thr-123, Asn-127, and Asp-128 together coordinate L-aspartate. Residue Asn-127 coordinates L-citrulline. L-citrulline contacts are provided by Arg-131, Ser-181, Ser-190, Glu-266, and Tyr-278.

Belongs to the argininosuccinate synthase family. Type 1 subfamily. As to quaternary structure, homotetramer.

The protein resides in the cytoplasm. It carries out the reaction L-citrulline + L-aspartate + ATP = 2-(N(omega)-L-arginino)succinate + AMP + diphosphate + H(+). It functions in the pathway amino-acid biosynthesis; L-arginine biosynthesis; L-arginine from L-ornithine and carbamoyl phosphate: step 2/3. This is Argininosuccinate synthase from Campylobacter jejuni subsp. jejuni serotype O:6 (strain 81116 / NCTC 11828).